We begin with the raw amino-acid sequence, 1462 residues long: Trifunctional nucleotide phosphoesterase protein YfkN (1462 aa).

Residues 1 to 35 form the signal peptide; that stretch reads MRIQKRRTHVENILRILLPPIMILSLILPTPPIHA. Positions 36-623 are 2',3'-cyclic nucleotide 2'-phosphodiesterase/3'-nucleotidase; that stretch reads EESAAPQVHL…GTNLTFESSL (588 aa). A divalent metal cation contacts are provided by Asp52, His54, Asp97, Asn141, His249, His282, and His284. A ribonucleoside 3'-phosphate contacts are provided by residues Tyr458 and 561–567; that span reads YRASGGG. The segment at 624–1427 is 5'-nucleotidase; the sequence is LAKPFADKAD…GPAGGLLPDT (804 aa). Residues Asp676, His678, Asp708, Asn740, His872, His895, and His897 each coordinate a divalent metal cation. Residues Phe1047 and 1127–1133 contribute to the a ribonucleoside 5'-phosphate site; that span reads FVGAGGD. A disordered region spans residues 1350–1422; it reads ILNSGSNNKP…GSGTDGPAGG (73 aa). Positions 1405-1421 are enriched in gly residues; that stretch reads GSGGNGSGGSGTDGPAG. The LPXTG sorting signal signature appears at 1424–1428; it reads LPDTA. At Thr1427 the chain carries Pentaglycyl murein peptidoglycan amidated threonine. Positions 1428 to 1462 are cleaved as a propeptide — removed by sortase; it reads ATSMYSILLAGFLISALGTAMYLHQRRKQNRANQA.

Belongs to the 5'-nucleotidase family. A divalent metal cation is required as a cofactor.

Its subcellular location is the secreted. It localises to the cell wall. It catalyses the reaction a nucleoside 2',3'-cyclic phosphate + H2O = a nucleoside 3'-phosphate + H(+). The enzyme catalyses a ribonucleoside 3'-phosphate + H2O = a ribonucleoside + phosphate. The catalysed reaction is a ribonucleoside 5'-phosphate + H2O = a ribonucleoside + phosphate. Functionally, catalyzes the release of inorganic phosphate from 2',3'-cyclic nucleotides through consecutive 2',3'-phosphodiesterase and 3'- (or 2') nucleotidase activities. Also possesses a 5'-nucleotidase activity. Does not catalyze the release of inorganic phosphate from 3',5'-cyclic nucleotides. Probably plays a role in the cellular reprocessing of nucleotides present in the medium, under conditions of phosphate shortage. The sequence is that of Trifunctional nucleotide phosphoesterase protein YfkN (yfkN) from Bacillus subtilis (strain 168).